The chain runs to 37 residues: Cytochrome b6-f complex subunit 5 (37 aa).

Residues 5 to 25 form a helical membrane-spanning segment; the sequence is LLDGLVLGLVFATLGGLFYAA.

Belongs to the PetG family. As to quaternary structure, the 4 large subunits of the cytochrome b6-f complex are cytochrome b6, subunit IV (17 kDa polypeptide, PetD), cytochrome f and the Rieske protein, while the 4 small subunits are PetG, PetL, PetM and PetN. The complex functions as a dimer.

The protein localises to the cellular thylakoid membrane. Its function is as follows. Component of the cytochrome b6-f complex, which mediates electron transfer between photosystem II (PSII) and photosystem I (PSI), cyclic electron flow around PSI, and state transitions. PetG is required for either the stability or assembly of the cytochrome b6-f complex. The chain is Cytochrome b6-f complex subunit 5 from Mastigocladus laminosus (Fischerella sp.).